Here is a 58-residue protein sequence, read N- to C-terminus: Metallothionein-1 (58 aa).

The beta stretch occupies residues 1-28; that stretch reads PGPCCNDKCVCKEGGCKEGCQCTSCRCS. A divalent metal cation-binding residues include cysteine 4, cysteine 5, cysteine 9, cysteine 11, cysteine 16, cysteine 20, cysteine 22, cysteine 25, cysteine 27, cysteine 30, cysteine 33, cysteine 37, cysteine 39, cysteine 45, cysteine 49, cysteine 53, cysteine 55, and cysteine 56. Positions 29–58 are alpha; sequence PCEKCSSGCKCANKEECSKTCSKACSCCPT.

Belongs to the metallothionein superfamily. Type 3 family.

Functionally, metallothioneins have a high content of cysteine residues that bind various heavy metals. Class I MTS in marine crustacea are involved in the sequestration of elevated levels of heavy-metal ions. The sequence is that of Metallothionein-1 from Scylla serrata (Mud crab).